The sequence spans 545 residues: ATP synthase subunit alpha (545 aa).

172–179 (GDRKTGKT) is a binding site for ATP.

Belongs to the ATPase alpha/beta chains family. In terms of assembly, F-type ATPases have 2 components, CF(1) - the catalytic core - and CF(0) - the membrane proton channel. CF(1) has five subunits: alpha(3), beta(3), gamma(1), delta(1), epsilon(1). CF(0) has three main subunits: a(1), b(2) and c(9-12). The alpha and beta chains form an alternating ring which encloses part of the gamma chain. CF(1) is attached to CF(0) by a central stalk formed by the gamma and epsilon chains, while a peripheral stalk is formed by the delta and b chains.

It localises to the cell membrane. It carries out the reaction ATP + H2O + 4 H(+)(in) = ADP + phosphate + 5 H(+)(out). In terms of biological role, produces ATP from ADP in the presence of a proton gradient across the membrane. The alpha chain is a regulatory subunit. The chain is ATP synthase subunit alpha from Corynebacterium urealyticum (strain ATCC 43042 / DSM 7109).